A 301-amino-acid chain; its full sequence is ATP synthase gamma chain (301 aa).

The protein belongs to the ATPase gamma chain family. In terms of assembly, F-type ATPases have 2 components, CF(1) - the catalytic core - and CF(0) - the membrane proton channel. CF(1) has five subunits: alpha(3), beta(3), gamma(1), delta(1), epsilon(1). CF(0) has three main subunits: a, b and c.

The protein localises to the cell inner membrane. Produces ATP from ADP in the presence of a proton gradient across the membrane. The gamma chain is believed to be important in regulating ATPase activity and the flow of protons through the CF(0) complex. This is ATP synthase gamma chain from Bordetella petrii (strain ATCC BAA-461 / DSM 12804 / CCUG 43448).